Consider the following 206-residue polypeptide: Large ribosomal subunit protein uL4 (206 aa).

The tract at residues 51-96 is disordered; that stretch reads LTRAEVKHSTKKPFRQKGTGNARAGMTSTPNRRGGGRAFPNKPDEN.

Belongs to the universal ribosomal protein uL4 family. Part of the 50S ribosomal subunit.

Functionally, one of the primary rRNA binding proteins, this protein initially binds near the 5'-end of the 23S rRNA. It is important during the early stages of 50S assembly. It makes multiple contacts with different domains of the 23S rRNA in the assembled 50S subunit and ribosome. Its function is as follows. Forms part of the polypeptide exit tunnel. The polypeptide is Large ribosomal subunit protein uL4 (Chromobacterium violaceum (strain ATCC 12472 / DSM 30191 / JCM 1249 / CCUG 213 / NBRC 12614 / NCIMB 9131 / NCTC 9757 / MK)).